A 340-amino-acid polypeptide reads, in one-letter code: MGKDYYQTLGLARGASDDEIKRAYRRQALRYHPDKNKEPGAEEKFKEIAEAYDVLSDPRKREIFDRYGEEGLKGGSPSGGSSGGANGTSFSYTFHGDPHAMFAEFFGGRNPFDTFFGQRNGEEGMDIDDTFSSFPMGMGGFTNMNFGRSRPSQEPTRKKQDPPVTHDLRVSLEEIYSGCTKKMKISHKRLNPDGKSIRNEDKILTIEVKRGWKEGTKITFPKEGDQTSNNIPADIVFVLKDKPHNIFKRDGSDVIYPARISLREALCGCTVNVPTLDGRTIPVVFKDVIRPGMRRKVPGEGLPLPKTPEKRGDLVIEFEVIFPERIPVSSRTILEQVLPI.

A J domain is found at Gly2–Glu70. Thr307 is modified (phosphothreonine).

Interacts with DNAJC3. Interacts with HSF1 (via transactivation domain); this interaction results in the inhibition of heat shock- and HSF1-induced transcriptional activity during the attenuation and recovery phase period of the heat shock response. Interacts with BAG3.

It localises to the cytoplasm. Its subcellular location is the nucleus. The protein resides in the nucleolus. Its function is as follows. Interacts with HSP70 and can stimulate its ATPase activity. Stimulates the association between HSC70 and HIP. Negatively regulates heat shock-induced HSF1 transcriptional activity during the attenuation and recovery phase period of the heat shock response. Stimulates ATP hydrolysis and the folding of unfolded proteins mediated by HSPA1A/B (in vitro). This Mus musculus (Mouse) protein is DnaJ homolog subfamily B member 1 (Dnajb1).